The primary structure comprises 1032 residues: Histone lysine demethylase PHF8 (1032 aa).

The PHD-type zinc-finger motif lies at 5–56 (PVYCLCRLPYDVTRFMIECDVCQDWFHGSCVGVEEDKAAEIDLYHCPNCQVT). The linker stretch occupies residues 65-83 (RRGAVKHADVGLGRDSGRP). The JmjC domain occupies 199-355 (FSDTRLSNLV…MQLRAYEIEK (157 aa)). Substrate is bound at residue T248. 2 residues coordinate Fe cation: H251 and D253. K268 contributes to the substrate binding site. Fe cation is bound at residue H323. 5 disordered regions span residues 455–515 (SGTP…KGKE), 577–660 (QGKK…VDFD), 697–857 (LDSA…REGA), 875–923 (QQEQ…EPPV), and 943–1015 (EYTA…ATAK). Polar residues predominate over residues 473 to 483 (QLNTPLTFSQH). Residues 583–592 (AGSANGAGSS) show a composition bias toward low complexity. The span at 620–632 (PRRRPSLPSKKKL) shows a compositional bias: basic residues. Basic and acidic residues predominate over residues 644 to 655 (PCSDPHRIREPG). Low complexity-rich tracts occupy residues 699–710 (SALSEEAPASPS) and 724–739 (PPSSSSSSSSSSPLSI). A compositionally biased stretch (basic residues) spans 774–784 (PGKRPIKRPAR). Basic and acidic residues predominate over residues 848-857 (KQERPVREGA). Residues 882–891 (ITKRKYTKKK) show a composition bias toward basic residues. Low complexity predominate over residues 970 to 990 (SRRPSLSPQNSSSYSPSAPSP).

Belongs to the JHDM1 histone demethylase family. JHDM1D subfamily. Requires Fe(2+) as cofactor.

It localises to the nucleus. Its subcellular location is the nucleolus. It catalyses the reaction N(6),N(6)-dimethyl-L-lysyl(36)-[histone H3] + 2 2-oxoglutarate + 2 O2 = L-lysyl(36)-[histone H3] + 2 formaldehyde + 2 succinate + 2 CO2. The catalysed reaction is N(6),N(6)-dimethyl-L-lysyl(9)-[histone H3] + 2 2-oxoglutarate + 2 O2 = L-lysyl(9)-[histone H3] + 2 formaldehyde + 2 succinate + 2 CO2. In terms of biological role, histone lysine demethylase with selectivity for the di- and monomethyl states that plays a key role cell cycle progression, rDNA transcription and brain development. Demethylates mono- and dimethylated histone H3 'Lys-9' residue (H3K9Me1 and H3K9Me2), dimethylated H3 'Lys-27' (H3K27Me2) and monomethylated histone H4 'Lys-20' residue (H4K20Me1). Acts as a transcription activator as H3K9Me1, H3K9Me2, H3K27Me2 and H4K20Me1 are epigenetic repressive marks. Involved in cell cycle progression by being required to control G1-S transition. Acts as a coactivator of rDNA transcription, by activating polymerase I (pol I) mediated transcription of rRNA genes. Has activity toward H4K20Me1 only when nucleosome is used as a substrate and when not histone octamer is used as substrate. Required for brain development, probably by regulating expression of neuron-specific genes. The polypeptide is Histone lysine demethylase PHF8 (phf8) (Danio rerio (Zebrafish)).